The chain runs to 592 residues: MNSVQLPTAQSSLRSHIHRPSKPVVGFTHFSSRSRIAVAVLSRDETSMTPPPPKLPLPRLKVSPNSLQYPAGYLGAVPERTNEAENGSIAEAMEYLTNILSTKVYDIAIESPLQLAKKLSKRLGVRMYLKREDLQPVFSFKLRGAYNMMVKLPADQLAKGVICSSAGNHAQGVALSASKLGCTAVIVMPVTTPEIKWQAVENLGATVVLFGDSYDQAQAHAKIRAEEEGLTFIPPFDHPDVIAGQGTVGMEITRQAKGPLHAIFVPVGGGGLIAGIAAYVKRVSPEVKIIGVEPADANAMALSLHHGERVILDQVGGFADGVAVKEVGEETFRISRNLMDGVVLVTRDAICASIKDMFEEKRNILEPAGALALAGAEAYCKYYGLKDVNVVAITSGANMNFDKLRIVTELANVGRQQEAVLATLMPEKPGSFKQFCELVGPMNISEFKYRCSSEKEAVVLYSVGVHTAGELKALQKRMESSQLKTVNLTTSDLVKDHLRYLMGGRSTVGDEVLCRFTFPERPGALMNFLDSFSPRWNITLFHYRGQGETGANVLVGIQVPEQEMEEFKNRAKALGYDYFLVSDDDYFKLLMH.

The transit peptide at 1-91 (MNSVQLPTAQ…NEAENGSIAE (91 aa)) directs the protein to the chloroplast. Lys141 bears the N6-(pyridoxal phosphate)lysine mark. 2 ACT-like domains span residues 419–490 (AVLA…NLTT) and 512–583 (VLCR…LVSD).

It belongs to the serine/threonine dehydratase family. Pyridoxal 5'-phosphate is required as a cofactor.

It localises to the plastid. The protein resides in the chloroplast. It catalyses the reaction L-threonine = 2-oxobutanoate + NH4(+). Its pathway is amino-acid biosynthesis; L-isoleucine biosynthesis; 2-oxobutanoate from L-threonine: step 1/1. Allosterically inhibited by isoleucine. Strain GM11b is isoleucine feedback insensitive and is resistant to the antimetabolite L-O-methylthreonine. Catalyzes the formation of alpha-ketobutyrate from threonine in a two-step reaction. The first step is a dehydration of threonine, followed by rehydration and liberation of ammonia. The polypeptide is Threonine dehydratase biosynthetic, chloroplastic (OMR1) (Arabidopsis thaliana (Mouse-ear cress)).